The chain runs to 420 residues: Pregnancy-associated glycoprotein 2 (420 aa).

Positions 1–15 are cleaved as a signal peptide; sequence MKWLVILGLVALSDC. N-linked (GlcNAc...) asparagine glycosylation is found at Asn56 and Asn79. A Peptidase A1 domain is found at 76 to 417; it reads YVGNISIGTP…DEGQNRIGLA (342 aa). Asp94 is a catalytic residue. Cystine bridges form between Cys107-Cys112 and Cys268-Cys272. The active site involves Asp277. A disulfide bridge links Cys341 with Cys376.

The protein belongs to the peptidase A1 family. In terms of tissue distribution, expressed throughout the chorion, with the signal localized exclusively over the trophectoderm.

It localises to the secreted. Its subcellular location is the extracellular space. The sequence is that of Pregnancy-associated glycoprotein 2 (PAG2) from Sus scrofa (Pig).